Reading from the N-terminus, the 446-residue chain is Baeyer-Villiger oxidase mdpL (446 aa).

Belongs to the AflY oxidoreductase family. It depends on NADPH as a cofactor.

The protein operates within secondary metabolite biosynthesis. Baeyer-Villiger oxidase; part of the gene cluster that mediates the biosynthesis of monodictyphenone, a prenyl xanthone derivative. The pathway begins with the synthesis of atrochrysone thioester by the polyketide synthase (PKS) mdpG. The atrochrysone carboxyl ACP thioesterase mdpF then breaks the thioester bond and releases the atrochrysone carboxylic acid from mdpG. The atrochrysone carboxylic acid is then converted to atrochrysone which is further transformed into emodin anthrone. The next step is performed by the anthrone oxygenase mdpH that catalyzes the oxidation of emodinanthrone to emodin. Emodin is further modified to yield monodictyphenone via several steps involving mdpB, mdpC mdpJ, mdpK and mdpL. These enzymes with xptA, xptB and xptC are also proposed to be involved in the synthesis of shamixanthone from emodin. Especially, direct reduction of emodin by the short chain dehydrogenase mdpC followed by dehydration catalyzed by the scytalone dehydratase-like protein mdpB gives loss of oxygen and formation of chrysophanol intermediate in two simple steps. This chain is Baeyer-Villiger oxidase mdpL, found in Emericella nidulans (strain FGSC A4 / ATCC 38163 / CBS 112.46 / NRRL 194 / M139) (Aspergillus nidulans).